A 489-amino-acid chain; its full sequence is Rhamnulokinase (489 aa).

An ATP-binding site is contributed by 13-17; sequence ASSGR. The cysteines at positions 68 and 222 are disulfide-linked. Substrate is bound by residues glycine 83 and 236-238; that span reads HDT. Residue aspartate 237 is the Proton acceptor of the active site. Residue threonine 259 coordinates ATP. Asparagine 296 provides a ligand contact to substrate. Residue glutamine 304 participates in ATP binding. A disulfide bridge connects residues cysteine 353 and cysteine 370. Glycine 402 serves as a coordination point for ATP. A disulfide bond links cysteine 413 and cysteine 417.

This sequence belongs to the rhamnulokinase family. As to quaternary structure, monomer. Mg(2+) serves as cofactor.

The enzyme catalyses L-rhamnulose + ATP = L-rhamnulose 1-phosphate + ADP + H(+). It participates in carbohydrate degradation; L-rhamnose degradation; glycerone phosphate from L-rhamnose: step 2/3. Its function is as follows. Involved in the catabolism of L-rhamnose (6-deoxy-L-mannose). Catalyzes the transfer of the gamma-phosphate group from ATP to the 1-hydroxyl group of L-rhamnulose to yield L-rhamnulose 1-phosphate. The chain is Rhamnulokinase from Escherichia fergusonii (strain ATCC 35469 / DSM 13698 / CCUG 18766 / IAM 14443 / JCM 21226 / LMG 7866 / NBRC 102419 / NCTC 12128 / CDC 0568-73).